The primary structure comprises 503 residues: Maturase K (503 aa).

The protein belongs to the intron maturase 2 family. MatK subfamily.

It localises to the plastid. Its subcellular location is the chloroplast. Functionally, usually encoded in the trnK tRNA gene intron. Probably assists in splicing its own and other chloroplast group II introns. This Rosa californica (California wild rose) protein is Maturase K.